Reading from the N-terminus, the 305-residue chain is Serine/threonine-protein phosphatase PP-X homolog 3 (305 aa).

Mn(2+) is bound by residues aspartate 53, histidine 55, aspartate 81, and asparagine 113. Histidine 114 (proton donor) is an active-site residue. The Mn(2+) site is built by histidine 163 and histidine 237.

It belongs to the PPP phosphatase family. PP-4 (PP-X) subfamily. Requires Mn(2+) as cofactor.

It carries out the reaction O-phospho-L-seryl-[protein] + H2O = L-seryl-[protein] + phosphate. It catalyses the reaction O-phospho-L-threonyl-[protein] + H2O = L-threonyl-[protein] + phosphate. This chain is Serine/threonine-protein phosphatase PP-X homolog 3 (Ppx3), found in Paramecium tetraurelia.